The sequence spans 410 residues: F-box/WD repeat-containing protein 4 (410 aa).

The 47-residue stretch at 23-69 (GPALWRLPEELLLLICSYLDTRALGRLAQVCRWLRRFTSCDLLWRPI) folds into the F-box domain. 4 WD repeats span residues 159–196 (GHDEDVCHFVLANSHIVSAGGDGKIGVHKIHSTFTVKY), 198–235 (AHEQEVNCVDCKGGIIVSGSRDRTAKVWPLASGRLGQC), 289–327 (PPGAGVLDVMYESPSTLLSCGYDTYVRYWDLRTSTRKCV), and 333–372 (PHDSTFYCLQTDGNHLLATGSSYYGLVRLWDRRQRACLHA).

Part of a SCF (SKP1-cullin-F-box) protein ligase complex. Interacts with POUF51.

Probably recognizes and binds to some phosphorylated proteins and promotes their ubiquitination and degradation. Likely to be involved in key signaling pathways crucial for normal limb development. May participate in Wnt signaling. This chain is F-box/WD repeat-containing protein 4 (Fbxw4), found in Mus musculus (Mouse).